The following is a 149-amino-acid chain: 3-dehydroquinate dehydratase (149 aa).

The active-site Proton acceptor is the Tyr26. Substrate contacts are provided by Asn77, His83, and Asp90. His103 acts as the Proton donor in catalysis. Substrate is bound by residues 104 to 105 (LS) and Arg114.

This sequence belongs to the type-II 3-dehydroquinase family. In terms of assembly, homododecamer.

The catalysed reaction is 3-dehydroquinate = 3-dehydroshikimate + H2O. The protein operates within metabolic intermediate biosynthesis; chorismate biosynthesis; chorismate from D-erythrose 4-phosphate and phosphoenolpyruvate: step 3/7. Its function is as follows. Catalyzes a trans-dehydration via an enolate intermediate. The sequence is that of 3-dehydroquinate dehydratase from Haemophilus influenzae (strain PittEE).